Reading from the N-terminus, the 142-residue chain is Large ribosomal subunit protein cL37 alpha (142 aa).

The transit peptide at 1 to 62 directs the protein to the chloroplast; that stretch reads MALLSPLLSL…AQKRGTVVAM (62 aa). A disordered region spans residues 123 to 142; that stretch reads RKLRKRGAWPPSKMKKLKNV.

Belongs to the chloroplast-specific ribosomal protein cL37 family. As to quaternary structure, component of the chloroplast large ribosomal subunit (LSU). Mature 70S chloroplast ribosomes of higher plants consist of a small (30S) and a large (50S) subunit. The 30S small subunit contains 1 molecule of ribosomal RNA (16S rRNA) and 24 different proteins. The 50S large subunit contains 3 rRNA molecules (23S, 5S and 4.5S rRNA) and 33 different proteins.

The protein resides in the plastid. Its subcellular location is the chloroplast. Its function is as follows. Component of the chloroplast ribosome (chloro-ribosome), a dedicated translation machinery responsible for the synthesis of chloroplast genome-encoded proteins, including proteins of the transcription and translation machinery and components of the photosynthetic apparatus. This is Large ribosomal subunit protein cL37 alpha (PSRP5) from Spinacia oleracea (Spinach).